Here is a 215-residue protein sequence, read N- to C-terminus: Ribonuclease T (215 aa).

An Exonuclease domain is found at 20-194 (VVIDVETAGF…YDTLQTAKLF (175 aa)). Mg(2+) contacts are provided by D23, E25, H181, and D186. H181 acts as the Proton donor/acceptor in catalysis.

This sequence belongs to the RNase T family. In terms of assembly, homodimer. Requires Mg(2+) as cofactor.

In terms of biological role, trims short 3' overhangs of a variety of RNA species, leaving a one or two nucleotide 3' overhang. Responsible for the end-turnover of tRNA: specifically removes the terminal AMP residue from uncharged tRNA (tRNA-C-C-A). Also appears to be involved in tRNA biosynthesis. In Yersinia pestis, this protein is Ribonuclease T.